The sequence spans 278 residues: Small ribosomal subunit protein uS3 (278 aa).

Positions 39-107 constitute a KH type-2 domain; that stretch reads LRKAISKKYV…KVQLNIVEIS (69 aa). A disordered region spans residues 255 to 278; it reads AEIPAEEKPKRVVKKAENITKEEE.

Belongs to the universal ribosomal protein uS3 family. Part of the 30S ribosomal subunit. Forms a tight complex with proteins S10 and S14.

Binds the lower part of the 30S subunit head. Binds mRNA in the 70S ribosome, positioning it for translation. The chain is Small ribosomal subunit protein uS3 from Dehalococcoides mccartyi (strain ATCC BAA-2100 / JCM 16839 / KCTC 5957 / BAV1).